We begin with the raw amino-acid sequence, 382 residues long: Alkanesulfonate monooxygenase (382 aa).

The protein belongs to the SsuD family.

The catalysed reaction is an alkanesulfonate + FMNH2 + O2 = an aldehyde + FMN + sulfite + H2O + 2 H(+). Its function is as follows. Catalyzes the desulfonation of aliphatic sulfonates. The polypeptide is Alkanesulfonate monooxygenase (Pseudomonas putida (strain ATCC 700007 / DSM 6899 / JCM 31910 / BCRC 17059 / LMG 24140 / F1)).